The sequence spans 136 residues: Ig heavy chain V region XIG8 (136 aa).

An N-terminal signal peptide occupies residues 1–18; it reads GFGIFVIFMFFSPSCILS. The 110-residue stretch at 19-128 folds into the Ig-like domain; it reads QTLQESGPGT…TAGYFEHWGQ (110 aa).

In Xenopus laevis (African clawed frog), this protein is Ig heavy chain V region XIG8.